A 152-amino-acid chain; its full sequence is Protein eva-1 homolog A (152 aa).

The tract at residues 1 to 60 (MRLPLSHSPEHVEMALLSNILAAYSFVSENPERAALYFVSGVCIGLVLTLAALVIRISCH) is necessary for the localization and biological activity. Residues 35-55 (ALYFVSGVCIGLVLTLAALVI) form a helical membrane-spanning segment. Residues 70 to 97 (KFLQDRESSSDSSDSEDGSEDTVSDLSV) are disordered. Over residues 82-92 (SDSEDGSEDTV) the composition is skewed to acidic residues. Position 106 is a phosphothreonine (Thr-106). At Ser-114 the chain carries Phosphoserine; by FAM20C.

It belongs to the EVA1 family. As to expression, expressed in lung, kidney, liver, pancreas, placenta, but not in heart and skeletal muscle.

It is found in the endoplasmic reticulum membrane. Its subcellular location is the lysosome membrane. Functionally, acts as a regulator of programmed cell death, mediating both autophagy and apoptosis. The polypeptide is Protein eva-1 homolog A (EVA1A) (Homo sapiens (Human)).